The primary structure comprises 73 residues: MWFCIDLGADAFKEAGVLAEKKNRRVLQHILGLNIFKRELIPPCKDPDPYQIQILLKNYILKNVSTVFTYYCQ.

This sequence belongs to the asfivirus DP63R family.

This is an uncharacterized protein from Ornithodoros (relapsing fever ticks).